The chain runs to 176 residues: Nucleoside triphosphate/diphosphate phosphatase (176 aa).

Arg-23 acts as the Proton donor in catalysis. Residues Asn-87, Asp-103, Asp-105, Asp-107, Asp-120, and Glu-123 each coordinate Mg(2+).

Belongs to the Ntdp family. Mg(2+) is required as a cofactor.

It catalyses the reaction a ribonucleoside 5'-triphosphate + H2O = a ribonucleoside 5'-diphosphate + phosphate + H(+). The catalysed reaction is a ribonucleoside 5'-diphosphate + H2O = a ribonucleoside 5'-phosphate + phosphate + H(+). Its function is as follows. Has nucleoside phosphatase activity towards nucleoside triphosphates and nucleoside diphosphates. The polypeptide is Nucleoside triphosphate/diphosphate phosphatase (Bacillus mycoides (strain KBAB4) (Bacillus weihenstephanensis)).